We begin with the raw amino-acid sequence, 224 residues long: ATP-dependent dethiobiotin synthetase BioD (224 aa).

Residue threonine 18 coordinates Mg(2+). Residue lysine 39 is part of the active site. Serine 43 contributes to the substrate binding site. The Mg(2+) site is built by aspartate 56 and glutamate 117. ATP is bound by residues aspartate 56, 117 to 120 (EGVG), and 177 to 178 (NE).

The protein belongs to the dethiobiotin synthetase family. In terms of assembly, homodimer. The cofactor is Mg(2+).

The protein resides in the cytoplasm. The enzyme catalyses (7R,8S)-7,8-diammoniononanoate + CO2 + ATP = (4R,5S)-dethiobiotin + ADP + phosphate + 3 H(+). It participates in cofactor biosynthesis; biotin biosynthesis; biotin from 7,8-diaminononanoate: step 1/2. In terms of biological role, catalyzes a mechanistically unusual reaction, the ATP-dependent insertion of CO2 between the N7 and N8 nitrogen atoms of 7,8-diaminopelargonic acid (DAPA, also called 7,8-diammoniononanoate) to form a ureido ring. The chain is ATP-dependent dethiobiotin synthetase BioD from Xanthomonas axonopodis pv. citri (strain 306).